A 197-amino-acid polypeptide reads, in one-letter code: Ribosomal RNA large subunit methyltransferase E (197 aa).

The S-adenosyl-L-methionine site is built by Gly50, Trp52, Asp70, Asp88, and Asp111. The Proton acceptor role is filled by Lys151.

This sequence belongs to the class I-like SAM-binding methyltransferase superfamily. RNA methyltransferase RlmE family.

Its subcellular location is the cytoplasm. The catalysed reaction is uridine(2552) in 23S rRNA + S-adenosyl-L-methionine = 2'-O-methyluridine(2552) in 23S rRNA + S-adenosyl-L-homocysteine + H(+). Functionally, specifically methylates the uridine in position 2552 of 23S rRNA at the 2'-O position of the ribose in the fully assembled 50S ribosomal subunit. This chain is Ribosomal RNA large subunit methyltransferase E, found in Syntrophobacter fumaroxidans (strain DSM 10017 / MPOB).